We begin with the raw amino-acid sequence, 454 residues long: Bifunctional protein GlmU (454 aa).

A pyrophosphorylase region spans residues 1–226 (MALNVVILAA…AIEVEGANNR (226 aa)). Residues 8 to 11 (LAAG), K22, Q73, 78 to 79 (GT), 100 to 102 (YGD), G137, E151, N166, and N224 each bind UDP-N-acetyl-alpha-D-glucosamine. D102 contacts Mg(2+). Residue N224 coordinates Mg(2+). The linker stretch occupies residues 227 to 247 (VQLAQLERAYQAREAEKLMLA). The segment at 248-454 (GANLRDPHRI…DWKRPVKIKK (207 aa)) is N-acetyltransferase. UDP-N-acetyl-alpha-D-glucosamine contacts are provided by R330 and K348. H360 acts as the Proton acceptor in catalysis. UDP-N-acetyl-alpha-D-glucosamine-binding residues include Y363 and N374. Residues A377, 383-384 (NY), S402, A420, and R437 contribute to the acetyl-CoA site.

This sequence in the N-terminal section; belongs to the N-acetylglucosamine-1-phosphate uridyltransferase family. The protein in the C-terminal section; belongs to the transferase hexapeptide repeat family. Homotrimer. Mg(2+) serves as cofactor.

The protein resides in the cytoplasm. The enzyme catalyses alpha-D-glucosamine 1-phosphate + acetyl-CoA = N-acetyl-alpha-D-glucosamine 1-phosphate + CoA + H(+). The catalysed reaction is N-acetyl-alpha-D-glucosamine 1-phosphate + UTP + H(+) = UDP-N-acetyl-alpha-D-glucosamine + diphosphate. The protein operates within nucleotide-sugar biosynthesis; UDP-N-acetyl-alpha-D-glucosamine biosynthesis; N-acetyl-alpha-D-glucosamine 1-phosphate from alpha-D-glucosamine 6-phosphate (route II): step 2/2. It functions in the pathway nucleotide-sugar biosynthesis; UDP-N-acetyl-alpha-D-glucosamine biosynthesis; UDP-N-acetyl-alpha-D-glucosamine from N-acetyl-alpha-D-glucosamine 1-phosphate: step 1/1. It participates in bacterial outer membrane biogenesis; LPS lipid A biosynthesis. Functionally, catalyzes the last two sequential reactions in the de novo biosynthetic pathway for UDP-N-acetylglucosamine (UDP-GlcNAc). The C-terminal domain catalyzes the transfer of acetyl group from acetyl coenzyme A to glucosamine-1-phosphate (GlcN-1-P) to produce N-acetylglucosamine-1-phosphate (GlcNAc-1-P), which is converted into UDP-GlcNAc by the transfer of uridine 5-monophosphate (from uridine 5-triphosphate), a reaction catalyzed by the N-terminal domain. This is Bifunctional protein GlmU from Shewanella putrefaciens (strain CN-32 / ATCC BAA-453).